The chain runs to 463 residues: Protein translocase subunit SecY (463 aa).

The Cytoplasmic segment spans residues 1–20 (MGFMDFLAKMGENLPAVSKP). A helical transmembrane segment spans residues 21-47 (KDKPTLTRKLLWTFIGLIVYLLMASIP). Over 48–60 (LYGVTSSNSFLSN) the chain is Extracellular. The helical intramembrane region spans 61-68 (FLAQQIIF). The chain crosses the membrane as a discontinuously helical span at residues 61–89 (FLAQQIIFASSQGTLAQLGIGPVITSGLI). The stretch at 69–80 (ASSQGTLAQLGI) is an intramembrane region. Residues 81-89 (GPVITSGLI) constitute an intramembrane region (helical). At 90–110 (MQILVGSKLINVDLTTQEGKS) the chain is on the cytoplasmic side. Residues 111–134 (KFTQAEKALALIFIIVESSLFGYV) traverse the membrane as a helical segment. At 135–142 (FTRATSNI) the chain is on the extracellular side. A helical transmembrane segment spans residues 143-167 (LLPIIVVVQLIIASYIILLLDEMIQ). The Cytoplasmic segment spans residues 168 to 174 (KGWGLGS). A helical transmembrane segment spans residues 175–193 (GVSLFIMAGIMKVIFWNMF). Residues 194-236 (GIVSVQSQNLPVGFFPLLVSYITSGRNLQEIVLNTSSTTPYQP) lie on the Extracellular side of the membrane. Residues 237–258 (DLIGLIATVGLTILIVYLVNTN) traverse the membrane as a helical segment. The Cytoplasmic portion of the chain corresponds to 259-283 (IYIPVTTQRLRGIRTTVPLNFLYVS). A helical transmembrane segment spans residues 284–305 (SIPVIFVSVLGADIQLFASLAN). The Extracellular portion of the chain corresponds to 306–341 (SISNSASGILTDIANAFFFPPQGVPHSVYALVVDPV). The helical transmembrane segment at 342-361 (GAAIYAAVFIVLSIVFGMLW) threads the bilayer. The Cytoplasmic portion of the chain corresponds to 362-404 (IDVAGLDPKTQAEQMIRSGIEIPGMRTNPRIIEGILSKYIYAL). Residues 405–423 (GFFSSLIVGLIAVVATFLG) form a helical membrane-spanning segment. The Extracellular segment spans residues 424–426 (TYG). Residues 427–441 (TGVGLLLAITIAMQY) form a helical membrane-spanning segment. Over 442 to 463 (YNLLAYERTLEMYPLLKRIVGE) the chain is Cytoplasmic.

Belongs to the SecY/SEC61-alpha family. Component of the Sec protein translocase complex. Heterotrimer consisting of alpha (SecY), beta (SecG) and gamma (SecE) subunits. The heterotrimers can form oligomers, although 1 heterotrimer is thought to be able to translocate proteins. Interacts with the ribosome. May interact with SecDF, and other proteins may be involved.

The protein resides in the cell membrane. The central subunit of the protein translocation channel SecYEG. Consists of two halves formed by TMs 1-5 and 6-10. These two domains form a lateral gate at the front which open onto the bilayer between TMs 2 and 7, and are clamped together by SecE at the back. The channel is closed by both a pore ring composed of hydrophobic SecY resides and a short helix (helix 2A) on the extracellular side of the membrane which forms a plug. The plug probably moves laterally to allow the channel to open. The ring and the pore may move independently. The protein is Protein translocase subunit SecY of Sulfolobus acidocaldarius (strain ATCC 33909 / DSM 639 / JCM 8929 / NBRC 15157 / NCIMB 11770).